A 252-amino-acid polypeptide reads, in one-letter code: 3-dehydroquinate dehydratase (252 aa).

3-dehydroquinate-binding positions include Ser21, 46-48 (EWR), and Arg82. His143 serves as the catalytic Proton donor/acceptor. Lys170 (schiff-base intermediate with substrate) is an active-site residue. The 3-dehydroquinate site is built by Arg213, Ser232, and Gln236.

Belongs to the type-I 3-dehydroquinase family. As to quaternary structure, homodimer.

It carries out the reaction 3-dehydroquinate = 3-dehydroshikimate + H2O. The protein operates within metabolic intermediate biosynthesis; chorismate biosynthesis; chorismate from D-erythrose 4-phosphate and phosphoenolpyruvate: step 3/7. Functionally, involved in the third step of the chorismate pathway, which leads to the biosynthesis of aromatic amino acids. Catalyzes the cis-dehydration of 3-dehydroquinate (DHQ) and introduces the first double bond of the aromatic ring to yield 3-dehydroshikimate. The protein is 3-dehydroquinate dehydratase of Escherichia coli O9:H4 (strain HS).